Here is a 422-residue protein sequence, read N- to C-terminus: UPF0229 protein Spro_2732 (422 aa).

Residues 77-90 (PGNDHFVQNDRVER) show a composition bias toward basic and acidic residues. The disordered stretch occupies residues 77–109 (PGNDHFVQNDRVERPQGGGGGGSGQGNASQDGE). The span at 92–101 (QGGGGGGSGQ) shows a compositional bias: gly residues.

Belongs to the UPF0229 family.

In Serratia proteamaculans (strain 568), this protein is UPF0229 protein Spro_2732.